Consider the following 448-residue polypeptide: Exodeoxyribonuclease 7 large subunit (448 aa).

This sequence belongs to the XseA family. In terms of assembly, heterooligomer composed of large and small subunits.

The protein localises to the cytoplasm. It is found in the nucleoid. The catalysed reaction is Exonucleolytic cleavage in either 5'- to 3'- or 3'- to 5'-direction to yield nucleoside 5'-phosphates.. Its function is as follows. Bidirectionally degrades single-stranded DNA into large acid-insoluble oligonucleotides, which are then degraded further into small acid-soluble oligonucleotides. The chain is Exodeoxyribonuclease 7 large subunit from Bacillus subtilis (strain 168).